A 231-amino-acid chain; its full sequence is Vacuolar protein sorting-associated protein 24 (231 aa).

Residues Lys184–Ser195 show a composition bias toward basic and acidic residues. Residues Lys184–Ile214 are disordered.

It belongs to the SNF7 family. As to quaternary structure, component of the endosomal sorting required for transport complex III (ESCRT-III).

The protein localises to the endosome membrane. It localises to the endomembrane system. Class E VPS protein implicated in concentration and sorting of cargo proteins of the multivesicular body (MVB) for incorporation into intralumenal vesicles. The lumenal sequestrated membrane proteins will be targeted into the vacuole after fusion of the endosome with the vacuole. The chain is Vacuolar protein sorting-associated protein 24 (vps24) from Schizosaccharomyces pombe (strain 972 / ATCC 24843) (Fission yeast).